The primary structure comprises 833 residues: DNA ligase (833 aa).

Residues 35-39 (DADYD), 84-85 (SL), and glutamate 115 contribute to the NAD(+) site. Lysine 117 functions as the N6-AMP-lysine intermediate in the catalytic mechanism. The NAD(+) site is built by arginine 138, glutamate 175, lysine 292, and lysine 316. Residues cysteine 410, cysteine 413, cysteine 428, and cysteine 434 each contribute to the Zn(2+) site. The region spanning 750–833 (EKTGPLDGQT…AFLGDHGQQP (84 aa)) is the BRCT domain.

The protein belongs to the NAD-dependent DNA ligase family. LigA subfamily. Mg(2+) is required as a cofactor. Requires Mn(2+) as cofactor.

It carries out the reaction NAD(+) + (deoxyribonucleotide)n-3'-hydroxyl + 5'-phospho-(deoxyribonucleotide)m = (deoxyribonucleotide)n+m + AMP + beta-nicotinamide D-nucleotide.. DNA ligase that catalyzes the formation of phosphodiester linkages between 5'-phosphoryl and 3'-hydroxyl groups in double-stranded DNA using NAD as a coenzyme and as the energy source for the reaction. It is essential for DNA replication and repair of damaged DNA. In Xanthomonas axonopodis pv. citri (strain 306), this protein is DNA ligase.